The chain runs to 200 residues: THO complex subunit tho5 (200 aa).

It belongs to the THOC5 family. Component of the THO and TREX complexes.

Its subcellular location is the cytoplasm. The protein localises to the nucleus. Component the THO subcomplex of the TREX complex, which operates in coupling transcription elongation to mRNA export. The THO complex is recruited to transcribed genes and moves along the gene with the elongating polymerase during transcription. THO is important for stabilizing nascent RNA in the RNA polymerase II elongation complex by preventing formation of DNA:RNA hybrids behind the elongating polymerase. The THO complex is also required to maintain TRAMP complex occupancy at sites of snoRNA transcription thus promoting exosome-mediated degradation of snoRNA precursors. In Schizosaccharomyces pombe (strain 972 / ATCC 24843) (Fission yeast), this protein is THO complex subunit tho5.